We begin with the raw amino-acid sequence, 159 residues long: Transcription elongation factor GreA (159 aa).

Positions Ile-14–Ser-76 form a coiled coil.

It belongs to the GreA/GreB family.

Necessary for efficient RNA polymerase transcription elongation past template-encoded arresting sites. The arresting sites in DNA have the property of trapping a certain fraction of elongating RNA polymerases that pass through, resulting in locked ternary complexes. Cleavage of the nascent transcript by cleavage factors such as GreA or GreB allows the resumption of elongation from the new 3'terminus. GreA releases sequences of 2 to 3 nucleotides. The polypeptide is Transcription elongation factor GreA (Clostridium kluyveri (strain NBRC 12016)).